Consider the following 213-residue polypeptide: uncharacterized protein (213 aa).

This is an uncharacterized protein from Homo sapiens (Human).